A 161-amino-acid polypeptide reads, in one-letter code: Endoribonuclease YbeY (161 aa).

The Zn(2+) site is built by His-121, His-125, and His-131.

The protein belongs to the endoribonuclease YbeY family. It depends on Zn(2+) as a cofactor.

It localises to the cytoplasm. Single strand-specific metallo-endoribonuclease involved in late-stage 70S ribosome quality control and in maturation of the 3' terminus of the 16S rRNA. In Xanthomonas oryzae pv. oryzae (strain MAFF 311018), this protein is Endoribonuclease YbeY.